Here is a 265-residue protein sequence, read N- to C-terminus: Phosphonates import ATP-binding protein PhnC 1 (265 aa).

An ABC transporter domain is found at 3 to 247; that stretch reads LRLSAIDLRH…HLDTLYANEQ (245 aa). ATP is bound at residue 36-43; sequence GPSGAGKT.

Belongs to the ABC transporter superfamily. Phosphonates importer (TC 3.A.1.9.1) family. In terms of assembly, the complex is composed of two ATP-binding proteins (PhnC), two transmembrane proteins (PhnE) and a solute-binding protein (PhnD).

The protein localises to the cell inner membrane. The enzyme catalyses phosphonate(out) + ATP + H2O = phosphonate(in) + ADP + phosphate + H(+). Functionally, part of the ABC transporter complex PhnCDE involved in phosphonates import. Responsible for energy coupling to the transport system. The protein is Phosphonates import ATP-binding protein PhnC 1 of Pseudomonas syringae pv. tomato (strain ATCC BAA-871 / DC3000).